Reading from the N-terminus, the 307-residue chain is Mitochondrial thiamine pyrophosphate carrier 1 (307 aa).

Solcar repeat units follow at residues 13 to 95 (VSTT…IGSF), 105 to 190 (SPQL…IKIF), and 203 to 305 (PFTL…FMNK). The next 6 membrane-spanning stretches (helical) occupy residues 19-36 (LVAG…IAPL), 76-96 (IMYI…GSFL), 108-126 (LYSC…LASY), 160-184 (MGFF…FGVY), 210-226 (LAGP…TFPL), and 280-297 (GVTM…ISLW).

This sequence belongs to the mitochondrial carrier (TC 2.A.29) family.

Its subcellular location is the mitochondrion inner membrane. Functionally, mitochondrial transporter that mediates uptake of thiamine pyrophosphate (ThPP) into mitochondria. The chain is Mitochondrial thiamine pyrophosphate carrier 1 (TPC1) from Candida glabrata (strain ATCC 2001 / BCRC 20586 / JCM 3761 / NBRC 0622 / NRRL Y-65 / CBS 138) (Yeast).